The primary structure comprises 396 residues: Putative peptide chain release factor 1, mitochondrial (396 aa).

Position 270 is an N5-methylglutamine (Q270).

The protein belongs to the prokaryotic/mitochondrial release factor family. Methylation of glutamine in the GGQ triplet is conserved from bacteria to mammals.

The protein resides in the mitochondrion. The chain is Putative peptide chain release factor 1, mitochondrial from Schizosaccharomyces pombe (strain 972 / ATCC 24843) (Fission yeast).